Here is a 211-residue protein sequence, read N- to C-terminus: MTDETTKNGPDATAADAAADAAANVEIDNSVQEEAKQPDPLELLKAENAELRDRYLRLAAEMDNLRRRTEREVKDAKSYSVAGFARDMLAVSDNLRRALDAISPEAKATADAGLTTLIEGVEMTERSMLSALERHGVRKLEPVGQKFDPNFHQAMFEVPNSEVPNNTVVQVVQAGFTIGERVLRPAMVGVAKGGPKPVEAEINSVFDEKDA.

The interval 1-43 (MTDETTKNGPDATAADAAADAAANVEIDNSVQEEAKQPDPLEL) is disordered. Low complexity predominate over residues 11–23 (DATAADAAADAAA). Over residues 33-43 (EEAKQPDPLEL) the composition is skewed to basic and acidic residues.

This sequence belongs to the GrpE family. As to quaternary structure, homodimer.

It is found in the cytoplasm. Its function is as follows. Participates actively in the response to hyperosmotic and heat shock by preventing the aggregation of stress-denatured proteins, in association with DnaK and GrpE. It is the nucleotide exchange factor for DnaK and may function as a thermosensor. Unfolded proteins bind initially to DnaJ; upon interaction with the DnaJ-bound protein, DnaK hydrolyzes its bound ATP, resulting in the formation of a stable complex. GrpE releases ADP from DnaK; ATP binding to DnaK triggers the release of the substrate protein, thus completing the reaction cycle. Several rounds of ATP-dependent interactions between DnaJ, DnaK and GrpE are required for fully efficient folding. The chain is Protein GrpE from Rhizobium etli (strain ATCC 51251 / DSM 11541 / JCM 21823 / NBRC 15573 / CFN 42).